Consider the following 452-residue polypeptide: Tryptophan biosynthesis protein TrpCF (452 aa).

Residues 1–256 (MQTVLAKIVA…AAVRRVLLGE (256 aa)) form an indole-3-glycerol phosphate synthase region. Positions 257 to 452 (NKVCGLTRAQ…ASVFQTLRAY (196 aa)) are N-(5'-phosphoribosyl)anthranilate isomerase.

The protein in the N-terminal section; belongs to the TrpC family. It in the C-terminal section; belongs to the TrpF family. In terms of assembly, monomer.

The enzyme catalyses N-(5-phospho-beta-D-ribosyl)anthranilate = 1-(2-carboxyphenylamino)-1-deoxy-D-ribulose 5-phosphate. The catalysed reaction is 1-(2-carboxyphenylamino)-1-deoxy-D-ribulose 5-phosphate + H(+) = (1S,2R)-1-C-(indol-3-yl)glycerol 3-phosphate + CO2 + H2O. The protein operates within amino-acid biosynthesis; L-tryptophan biosynthesis; L-tryptophan from chorismate: step 3/5. It functions in the pathway amino-acid biosynthesis; L-tryptophan biosynthesis; L-tryptophan from chorismate: step 4/5. In terms of biological role, bifunctional enzyme that catalyzes two sequential steps of tryptophan biosynthetic pathway. The first reaction is catalyzed by the isomerase, coded by the TrpF domain; the second reaction is catalyzed by the synthase, coded by the TrpC domain. The sequence is that of Tryptophan biosynthesis protein TrpCF (trpC) from Salmonella typhimurium (strain LT2 / SGSC1412 / ATCC 700720).